Here is a 1093-residue protein sequence, read N- to C-terminus: Error-prone DNA polymerase (1093 aa).

The segment at 1 to 55 is disordered; it reads MGWFNGPPSWAEMERVLDSKPRRAGESAAPEPDGPLSRGRATYRPPDEGRAARSS. Positions 12–25 are enriched in basic and acidic residues; that stretch reads EMERVLDSKPRRAG.

This sequence belongs to the DNA polymerase type-C family. DnaE2 subfamily.

The protein resides in the cytoplasm. It catalyses the reaction DNA(n) + a 2'-deoxyribonucleoside 5'-triphosphate = DNA(n+1) + diphosphate. In terms of biological role, DNA polymerase involved in damage-induced mutagenesis and translesion synthesis (TLS). It is not the major replicative DNA polymerase. This Mycolicibacterium paratuberculosis (strain ATCC BAA-968 / K-10) (Mycobacterium paratuberculosis) protein is Error-prone DNA polymerase.